The sequence spans 201 residues: FMN-dependent NADH:quinone oxidoreductase (201 aa).

92–95 (MWNL) provides a ligand contact to FMN.

It belongs to the azoreductase type 1 family. In terms of assembly, homodimer. It depends on FMN as a cofactor.

It carries out the reaction 2 a quinone + NADH + H(+) = 2 a 1,4-benzosemiquinone + NAD(+). It catalyses the reaction N,N-dimethyl-1,4-phenylenediamine + anthranilate + 2 NAD(+) = 2-(4-dimethylaminophenyl)diazenylbenzoate + 2 NADH + 2 H(+). Quinone reductase that provides resistance to thiol-specific stress caused by electrophilic quinones. Its function is as follows. Also exhibits azoreductase activity. Catalyzes the reductive cleavage of the azo bond in aromatic azo compounds to the corresponding amines. The protein is FMN-dependent NADH:quinone oxidoreductase of Caldicellulosiruptor saccharolyticus (strain ATCC 43494 / DSM 8903 / Tp8T 6331).